The sequence spans 265 residues: Thiazole synthase (265 aa).

Lysine 106 acts as the Schiff-base intermediate with DXP in catalysis. 1-deoxy-D-xylulose 5-phosphate-binding positions include glycine 167, 193 to 194 (AG), and 215 to 216 (NT). A disordered region spans residues 245–265 (GRIPRRARAEPSSPQLGLVGS).

It belongs to the ThiG family. As to quaternary structure, homotetramer. Forms heterodimers with either ThiH or ThiS.

The protein localises to the cytoplasm. The catalysed reaction is [ThiS sulfur-carrier protein]-C-terminal-Gly-aminoethanethioate + 2-iminoacetate + 1-deoxy-D-xylulose 5-phosphate = [ThiS sulfur-carrier protein]-C-terminal Gly-Gly + 2-[(2R,5Z)-2-carboxy-4-methylthiazol-5(2H)-ylidene]ethyl phosphate + 2 H2O + H(+). It functions in the pathway cofactor biosynthesis; thiamine diphosphate biosynthesis. Its function is as follows. Catalyzes the rearrangement of 1-deoxy-D-xylulose 5-phosphate (DXP) to produce the thiazole phosphate moiety of thiamine. Sulfur is provided by the thiocarboxylate moiety of the carrier protein ThiS. In vitro, sulfur can be provided by H(2)S. The protein is Thiazole synthase of Methylobacterium sp. (strain 4-46).